A 152-amino-acid polypeptide reads, in one-letter code: Deoxyuridine 5'-triphosphate nucleotidohydrolase (152 aa).

Substrate contacts are provided by residues 71–73, Asn-84, 88–90, and Met-98; these read RSG and LID.

It belongs to the dUTPase family. Mg(2+) serves as cofactor.

The catalysed reaction is dUTP + H2O = dUMP + diphosphate + H(+). It functions in the pathway pyrimidine metabolism; dUMP biosynthesis; dUMP from dCTP (dUTP route): step 2/2. Functionally, this enzyme is involved in nucleotide metabolism: it produces dUMP, the immediate precursor of thymidine nucleotides and it decreases the intracellular concentration of dUTP so that uracil cannot be incorporated into DNA. This chain is Deoxyuridine 5'-triphosphate nucleotidohydrolase, found in Shewanella sediminis (strain HAW-EB3).